The chain runs to 272 residues: Low-density lipoprotein receptor class A domain-containing protein 2 (272 aa).

Positions 1-25 are cleaved as a signal peptide; the sequence is MEACCLLQLPQRLLLLGAAALTATA. At 26 to 233 the chain is on the extracellular side; that stretch reads LETADLAELC…GSTDAHTSRS (208 aa). The N-linked (GlcNAc...) asparagine glycan is linked to N97. The LDL-receptor class A domain maps to 172-214; that stretch reads PCGAYFRCQNGRCIPSSLVCDPWGMDNCGDGSDQGSWSPADCR. 3 cysteine pairs are disulfide-bonded: C173–C184, C179–C199, and C191–C213. The tract at residues 202-272 is disordered; the sequence is GSDQGSWSPA…QDAALEGSTE (71 aa). Residues 220 to 236 show a composition bias toward polar residues; the sequence is PSQTGSTDAHTSRSLTP. Residues 234–250 form a helical membrane-spanning segment; sequence LTPSPALGSAGSLWIAA. The Cytoplasmic segment spans residues 251–272; that stretch reads ERSSPAGRDPTRQDAALEGSTE.

Belongs to the LDLR family.

The protein resides in the membrane. This is Low-density lipoprotein receptor class A domain-containing protein 2 (LDLRAD2) from Homo sapiens (Human).